The primary structure comprises 322 residues: Lipoyl synthase (322 aa).

A compositionally biased stretch (basic and acidic residues) spans 1–25 (MSQRITIDHRSAPALRHPEKAHRPD). A disordered region spans residues 1-29 (MSQRITIDHRSAPALRHPEKAHRPDNPIQ). Positions 61, 66, 72, 87, 91, 94, and 300 each coordinate [4Fe-4S] cluster. The 217-residue stretch at 73–289 (WSQRHATMMI…AAAARSKGFL (217 aa)) folds into the Radical SAM core domain.

Belongs to the radical SAM superfamily. Lipoyl synthase family. It depends on [4Fe-4S] cluster as a cofactor.

The protein localises to the cytoplasm. It catalyses the reaction [[Fe-S] cluster scaffold protein carrying a second [4Fe-4S](2+) cluster] + N(6)-octanoyl-L-lysyl-[protein] + 2 oxidized [2Fe-2S]-[ferredoxin] + 2 S-adenosyl-L-methionine + 4 H(+) = [[Fe-S] cluster scaffold protein] + N(6)-[(R)-dihydrolipoyl]-L-lysyl-[protein] + 4 Fe(3+) + 2 hydrogen sulfide + 2 5'-deoxyadenosine + 2 L-methionine + 2 reduced [2Fe-2S]-[ferredoxin]. Its pathway is protein modification; protein lipoylation via endogenous pathway; protein N(6)-(lipoyl)lysine from octanoyl-[acyl-carrier-protein]: step 2/2. Functionally, catalyzes the radical-mediated insertion of two sulfur atoms into the C-6 and C-8 positions of the octanoyl moiety bound to the lipoyl domains of lipoate-dependent enzymes, thereby converting the octanoylated domains into lipoylated derivatives. This chain is Lipoyl synthase, found in Gluconobacter oxydans (strain 621H) (Gluconobacter suboxydans).